We begin with the raw amino-acid sequence, 486 residues long: Palmitoyltransferase pfa5 (486 aa).

A run of 2 helical transmembrane segments spans residues 12 to 32 (AVAR…CYVI) and 54 to 74 (VGAG…VIIT). The tract at residues 94–130 (AADQQSTPAKRSKSRSRRKGHGHGHRKSKSDEVSDKP) is disordered. A compositionally biased stretch (basic residues) spans 103–121 (KRSKSRSRRKGHGHGHRKS). One can recognise a DHHC domain in the interval 172 to 222 (IYCSKCCHYKPDRTHHCREVDRCVRKMDHFCPWVGGVVSETSFKFFIQFVF). 2 consecutive transmembrane segments (helical) span residues 217-237 (FIQF…VCAI) and 261-281 (LVML…FNLT). Disordered stretches follow at residues 326–357 (PVPP…STDP) and 433–486 (KDAA…TGTT). Residues 447–456 (SSYNSSPSAP) are compositionally biased toward low complexity. Residues 460–480 (RSKRKQKRGKHHHHHHHHRHS) are compositionally biased toward basic residues.

It belongs to the DHHC palmitoyltransferase family. PFA5 subfamily. Post-translationally, autopalmitoylated.

The protein localises to the membrane. It catalyses the reaction L-cysteinyl-[protein] + hexadecanoyl-CoA = S-hexadecanoyl-L-cysteinyl-[protein] + CoA. This Emericella nidulans (strain FGSC A4 / ATCC 38163 / CBS 112.46 / NRRL 194 / M139) (Aspergillus nidulans) protein is Palmitoyltransferase pfa5 (pfa5).